Consider the following 500-residue polypeptide: Histidine ammonia-lyase (500 aa).

Residues 142 to 144 constitute a cross-link (5-imidazolinone (Ala-Gly)); it reads ASG. Ser-143 bears the 2,3-didehydroalanine (Ser) mark.

This sequence belongs to the PAL/histidase family. In terms of processing, contains an active site 4-methylidene-imidazol-5-one (MIO), which is formed autocatalytically by cyclization and dehydration of residues Ala-Ser-Gly.

Its subcellular location is the cytoplasm. It carries out the reaction L-histidine = trans-urocanate + NH4(+). The protein operates within amino-acid degradation; L-histidine degradation into L-glutamate; N-formimidoyl-L-glutamate from L-histidine: step 1/3. The protein is Histidine ammonia-lyase of Macrococcus caseolyticus (strain JCSC5402) (Macrococcoides caseolyticum).